We begin with the raw amino-acid sequence, 331 residues long: Ribonuclease Z (331 aa).

Zn(2+) contacts are provided by histidine 56, histidine 58, aspartate 60, histidine 61, histidine 162, aspartate 235, and histidine 297. Residue aspartate 60 is the Proton acceptor of the active site.

This sequence belongs to the RNase Z family. In terms of assembly, homodimer. Zn(2+) serves as cofactor.

It catalyses the reaction Endonucleolytic cleavage of RNA, removing extra 3' nucleotides from tRNA precursor, generating 3' termini of tRNAs. A 3'-hydroxy group is left at the tRNA terminus and a 5'-phosphoryl group is left at the trailer molecule.. Its function is as follows. Zinc phosphodiesterase, which displays some tRNA 3'-processing endonuclease activity. Probably involved in tRNA maturation, by removing a 3'-trailer from precursor tRNA. The polypeptide is Ribonuclease Z (rnz) (Deinococcus radiodurans (strain ATCC 13939 / DSM 20539 / JCM 16871 / CCUG 27074 / LMG 4051 / NBRC 15346 / NCIMB 9279 / VKM B-1422 / R1)).